The primary structure comprises 403 residues: Nuclear receptor subfamily 2 group F member 5 (403 aa).

Positions 16–44 are disordered; that stretch reads PGSQLQMCSQEPGGTPGTPSGSTPGNDAL. Positions 51-126 form a DNA-binding region, nuclear receptor; that stretch reads NVDCMVCGDK…VGMRREAVQR (76 aa). NR C4-type zinc fingers lie at residues 54–74 and 90–114; these read CMVCGDKSSGKHYGQFTCEGC and CRGNRDCPIDQHHRNQCQYCRLKKC. The NR LBD domain occupies 152–378; the sequence is YLSGFISLLL…TLLRDMLLSG (227 aa).

Belongs to the nuclear hormone receptor family. NR2 subfamily.

It localises to the nucleus. Putative receptor that is required in photoreceptor cells precursors during eye development. The protein is Nuclear receptor subfamily 2 group F member 5 (nr2f5) of Danio rerio (Zebrafish).